A 614-amino-acid polypeptide reads, in one-letter code: Pyrophosphate--fructose 6-phosphate 1-phosphotransferase subunit alpha 1 (614 aa).

The protein belongs to the phosphofructokinase type A (PFKA) family. PPi-dependent PFK group II subfamily. Clade 'Long' sub-subfamily. Tetramer of two alpha (regulatory) and two beta (catalytic) chains. As to expression, expressed in leaves, roots, and flowers (e.g. sepals, petals, stamen and gynoecium).

The protein localises to the cytoplasm. Its pathway is carbohydrate degradation; glycolysis; D-glyceraldehyde 3-phosphate and glycerone phosphate from D-glucose: step 3/4. Its activity is regulated as follows. Allosterically activated by fructose 2,6-bisphosphate. Its function is as follows. Regulatory subunit of pyrophosphate--fructose 6-phosphate 1-phosphotransferase. The protein is Pyrophosphate--fructose 6-phosphate 1-phosphotransferase subunit alpha 1 of Arabidopsis thaliana (Mouse-ear cress).